Reading from the N-terminus, the 534-residue chain is Alkaline serine exoprotease A (534 aa).

The N-terminal stretch at 1–21 (MLKKLLSCCITSALCFHSSLA) is a signal peptide. Residues 22–141 (FSQPNEIADS…LSLDPIVSAD (120 aa)) constitute a propeptide that is removed on maturation. The region spanning 57–134 (RYIVVFQQPQ…YIEQDRILSL (78 aa)) is the Inhibitor I9 domain. The Peptidase S8 domain occupies 148-419 (IWGLDRIDQR…KLLYSLTDAD (272 aa)). Active-site charge relay system residues include aspartate 180, histidine 213, and serine 363. The disordered stretch occupies residues 423–442 (DCGGPDPTPDPEGKLTSGVP).

Belongs to the peptidase S8 family.

This Vibrio alginolyticus protein is Alkaline serine exoprotease A (proA).